The sequence spans 37 residues: uncharacterized protein (37 aa).

The chain crosses the membrane as a helical span at residues 1-21; the sequence is MQDLEIFLSIFAFIFVFYFGA.

Its subcellular location is the endoplasmic reticulum membrane. This is an uncharacterized protein from Saccharomyces cerevisiae (strain ATCC 204508 / S288c) (Baker's yeast).